A 220-amino-acid polypeptide reads, in one-letter code: Ras-related protein Rab-3A (220 aa).

GTP-binding residues include Ser-31, Ser-32, Val-33, Gly-34, Lys-35, Thr-36, Ser-37, Thr-48, Pro-49, Ser-53, and Thr-54. Residue Thr-36 participates in Mg(2+) binding. The Switch 1 motif lies at Pro-49–Asp-58. Mg(2+)-binding residues include Thr-54 and Asp-77. Residue Gly-80 participates in GTP binding. Positions Gly-80–Met-96 match the Switch 2 motif. At Thr-86 the chain carries Phosphothreonine. Residues Asn-135, Lys-136, Asp-138, Ala-166, and Lys-167 each coordinate GTP. 2 positions are modified to phosphoserine: Ser-188 and Ser-190. The disordered stretch occupies residues Ala-194–Cys-220. S-geranylgeranyl cysteine attachment occurs at residues Cys-218 and Cys-220. Cys-220 is modified (cysteine methyl ester).

Belongs to the small GTPase superfamily. Rab family. Interacts with RIMS1 and RIMS2. Interacts with Rabphilin-3A/RPH3A and Rab effector Noc2/RPH3AL. Interacts with SYTL4. Interacts with RAB3IP. Interacts with SGSM1 and SGSM3. Interacts with SYT1. Interacts with MYH9; this interaction is essential for lysosome exocytosis and plasma membrane repair. Interacts with STXBP1; this interaction promotes RAB3A dissociation from the vesicle membrane. Interacts with SNCA. Interacts with GDI1, GDI2, CHM and CHML; phosphorylation at Thr-86 disrupts these interactions. Interacts with MADD (via uDENN domain); the GTP-bound form is preferred for interaction. Mg(2+) serves as cofactor. Post-translationally, phosphorylation of Thr-86 in the switch II region by LRRK2 prevents the association of RAB regulatory proteins, including CHM, CHML and RAB GDP dissociation inhibitors GDI1 and GDI2. In terms of tissue distribution, specifically expressed in brain.

The protein localises to the cytoplasm. It localises to the cytosol. It is found in the lysosome. The protein resides in the cytoplasmic vesicle. Its subcellular location is the secretory vesicle. The protein localises to the cell projection. It localises to the axon. It is found in the cell membrane. The protein resides in the presynapse. Its subcellular location is the postsynapse. The enzyme catalyses GTP + H2O = GDP + phosphate + H(+). With respect to regulation, regulated by guanine nucleotide exchange factors (GEFs) including RAB3IL1 and MADD which promote the exchange of bound GDP for free GTP. Regulated by GTPase activating proteins (GAPs) including RAB3GAP1 and TBC1D10B which increase the GTP hydrolysis activity. Inhibited by GDP dissociation inhibitors (GDIs) which prevent Rab-GDP dissociation. In terms of biological role, the small GTPases Rab are key regulators of intracellular membrane trafficking, from the formation of transport vesicles to their fusion with membranes. Rabs cycle between an inactive GDP-bound form and an active GTP-bound form that is able to recruit to membranes different sets of downstream effectors directly responsible for vesicle formation, movement, tethering and fusion. RAB3A plays a central role in regulated exocytosis and secretion. Controls the recruitment, tethering and docking of secretory vesicles to the plasma membrane. Upon stimulation, switches to its active GTP-bound form, cycles to vesicles and recruits effectors such as RIMS1, RIMS2, Rabphilin-3A/RPH3A, RPH3AL or SYTL4 to help the docking of vesicules onto the plasma membrane. Upon GTP hydrolysis by GTPase-activating protein, dissociates from the vesicle membrane allowing the exocytosis to proceed. Stimulates insulin secretion through interaction with RIMS2 or RPH3AL effectors in pancreatic beta cells. Regulates calcium-dependent lysosome exocytosis and plasma membrane repair (PMR) via the interaction with 2 effectors, SYTL4 and myosin-9/MYH9. Acts as a positive regulator of acrosome content secretion in sperm cells by interacting with RIMS1. Also plays a role in the regulation of dopamine release by interacting with synaptotagmin I/SYT. The sequence is that of Ras-related protein Rab-3A (RAB3A) from Bos taurus (Bovine).